We begin with the raw amino-acid sequence, 289 residues long: uncharacterized protein (289 aa).

A signal peptide spans Met-1–Ala-19. A run of 2 helical transmembrane segments spans residues Gly-90–Val-110 and Ala-257–Ala-277.

It is found in the cell membrane. This is an uncharacterized protein from Mycobacterium tuberculosis (strain CDC 1551 / Oshkosh).